The primary structure comprises 304 residues: Nod factor export ATP-binding protein I (304 aa).

In terms of domain architecture, ABC transporter spans isoleucine 6 to tyrosine 236. Glycine 38–threonine 45 contributes to the ATP binding site.

Belongs to the ABC transporter superfamily. Lipooligosaccharide exporter (TC 3.A.1.102) family. In terms of assembly, the complex is composed of two ATP-binding proteins (NodI) and two transmembrane proteins (NodJ).

The protein resides in the cell inner membrane. Part of the ABC transporter complex NodIJ involved in the export of the nodulation factors (Nod factors), the bacterial signal molecules that induce symbiosis and subsequent nodulation induction. Nod factors are LCO (lipo-chitin oligosaccharide), a modified beta-1,4-linked N-acetylglucosamine oligosaccharide. This subunit is responsible for energy coupling to the transport system. This chain is Nod factor export ATP-binding protein I, found in Burkholderia orbicola (strain AU 1054).